We begin with the raw amino-acid sequence, 78 residues long: Teretoxin Tsu6.15 (78 aa).

An N-terminal signal peptide occupies residues 1–21 (MATSGRLLCFCLVLGLVFESL). A propeptide spanning residues 22-47 (GYSEARPPRDRKRTVTAKRYDPLAQR) is cleaved from the precursor.

The protein belongs to the teretoxin M (TM) superfamily. In terms of processing, contains 3 disulfide bonds. As to expression, expressed by the venom duct.

The protein localises to the secreted. The sequence is that of Teretoxin Tsu6.15 from Terebra subulata (Chocolate spotted auger).